A 445-amino-acid polypeptide reads, in one-letter code: GTPase Der (445 aa).

EngA-type G domains lie at 3-167 (PVIA…YAGQ) and 180-353 (VKIA…AAAM). Residues 9–16 (GRPNVGKS), 56–60 (DTGGF), 119–122 (NKAE), 186–193 (GRPNVGKS), 233–237 (DTAGL), and 298–301 (NKWD) contribute to the GTP site. Positions 354–438 (AKLPTPKLTR…PLRIEFRSST (85 aa)) constitute a KH-like domain.

Belongs to the TRAFAC class TrmE-Era-EngA-EngB-Septin-like GTPase superfamily. EngA (Der) GTPase family. Associates with the 50S ribosomal subunit.

Its function is as follows. GTPase that plays an essential role in the late steps of ribosome biogenesis. The protein is GTPase Der of Paraburkholderia phytofirmans (strain DSM 17436 / LMG 22146 / PsJN) (Burkholderia phytofirmans).